Consider the following 253-residue polypeptide: Acidic endochitinase pcht28 (253 aa).

Positions 1–24 (MKFNIVSPVALSCLFFLFLTGTLA) are cleaved as a signal peptide. Residue Glu92 is the Proton donor of the active site. Cys212 and Cys244 form a disulfide bridge.

The protein belongs to the glycosyl hydrolase 19 family. Chitinase class II subfamily.

It is found in the secreted. The protein localises to the extracellular space. The catalysed reaction is Random endo-hydrolysis of N-acetyl-beta-D-glucosaminide (1-&gt;4)-beta-linkages in chitin and chitodextrins.. Functionally, defense against chitin-containing fungal pathogens. The sequence is that of Acidic endochitinase pcht28 from Solanum chilense (Tomato).